We begin with the raw amino-acid sequence, 224 residues long: MNALVLGATGLCGSSFLKYASQNSGFDKVYAITRRDLPSELKTDSVVSVVSSETNKWGELIPEDATVLLTGLATTRAAAGGFENQYKIDHDMNVELAKVAKAKGYKVCVLVSSLGANENSFLPYLKLKGETERDIIALDFDKTIILRPGGLLGERNGTFKGFGDKYFSKISSCFYRSKLQSALGYPIYGDEVGKVGVKLALDSSRTEKVQIVSSPELLKLAEEK.

This sequence belongs to the FMP52 family.

The protein resides in the mitochondrion outer membrane. The chain is Protein FMP52, mitochondrial (FMP52) from Kluyveromyces lactis (strain ATCC 8585 / CBS 2359 / DSM 70799 / NBRC 1267 / NRRL Y-1140 / WM37) (Yeast).